A 165-amino-acid polypeptide reads, in one-letter code: Large ribosomal subunit protein uL10 (165 aa).

It belongs to the universal ribosomal protein uL10 family. Part of the ribosomal stalk of the 50S ribosomal subunit. The N-terminus interacts with L11 and the large rRNA to form the base of the stalk. The C-terminus forms an elongated spine to which L12 dimers bind in a sequential fashion forming a multimeric L10(L12)X complex.

In terms of biological role, forms part of the ribosomal stalk, playing a central role in the interaction of the ribosome with GTP-bound translation factors. The polypeptide is Large ribosomal subunit protein uL10 (Burkholderia cenocepacia (strain HI2424)).